The chain runs to 122 residues: Phospholipase A2 nigroviriditoxin basic subunit B (122 aa).

7 disulfides stabilise this stretch: C26–C115, C28–C44, C43–C95, C49–C122, C50–C88, C57–C81, and C75–C86. Ca(2+) is bound by residues Y27, G29, and G31. H47 is an active-site residue. Residue D48 participates in Ca(2+) binding. Residue D89 is part of the active site.

This sequence belongs to the phospholipase A2 family. Group II subfamily. D49 sub-subfamily. In terms of assembly, nigroviriditoxin is a heterodimer of an acidic subunit A and a basic subunit B. The cofactor is Ca(2+). In terms of tissue distribution, expressed by the venom gland.

It localises to the secreted. It catalyses the reaction a 1,2-diacyl-sn-glycero-3-phosphocholine + H2O = a 1-acyl-sn-glycero-3-phosphocholine + a fatty acid + H(+). In terms of biological role, heterodimer A-B: Nigroviriditoxin possesses phospholipase A2 (PLA2) activity. It consists of a non-covalent association of a basic PLA2 subunit B with a non-enzymatic subunit A. Functionally, subunit B: Snake venom phospholipase A2 (PLA2) that induces myonecrosis in mice. PLA2 catalyzes the calcium-dependent hydrolysis of the 2-acyl groups in 3-sn-phosphoglycerides. The sequence is that of Phospholipase A2 nigroviriditoxin basic subunit B from Bothriechis nigroviridis (Black-speckled palm pit viper).